The following is a 307-amino-acid chain: UDP-3-O-acyl-N-acetylglucosamine deacetylase (307 aa).

The Zn(2+) site is built by H80, H239, and D243. The active-site Proton donor is the H266.

It belongs to the LpxC family. Zn(2+) is required as a cofactor.

The catalysed reaction is a UDP-3-O-[(3R)-3-hydroxyacyl]-N-acetyl-alpha-D-glucosamine + H2O = a UDP-3-O-[(3R)-3-hydroxyacyl]-alpha-D-glucosamine + acetate. It functions in the pathway glycolipid biosynthesis; lipid IV(A) biosynthesis; lipid IV(A) from (3R)-3-hydroxytetradecanoyl-[acyl-carrier-protein] and UDP-N-acetyl-alpha-D-glucosamine: step 2/6. Catalyzes the hydrolysis of UDP-3-O-myristoyl-N-acetylglucosamine to form UDP-3-O-myristoylglucosamine and acetate, the committed step in lipid A biosynthesis. The chain is UDP-3-O-acyl-N-acetylglucosamine deacetylase from Neisseria meningitidis serogroup C (strain 053442).